The sequence spans 212 residues: ATP-dependent Clp protease proteolytic subunit (212 aa).

S114 functions as the Nucleophile in the catalytic mechanism. Residue H139 is part of the active site.

The protein belongs to the peptidase S14 family. Fourteen ClpP subunits assemble into 2 heptameric rings which stack back to back to give a disk-like structure with a central cavity, resembling the structure of eukaryotic proteasomes.

The protein localises to the cytoplasm. It carries out the reaction Hydrolysis of proteins to small peptides in the presence of ATP and magnesium. alpha-casein is the usual test substrate. In the absence of ATP, only oligopeptides shorter than five residues are hydrolyzed (such as succinyl-Leu-Tyr-|-NHMec, and Leu-Tyr-Leu-|-Tyr-Trp, in which cleavage of the -Tyr-|-Leu- and -Tyr-|-Trp bonds also occurs).. Its function is as follows. Cleaves peptides in various proteins in a process that requires ATP hydrolysis. Has a chymotrypsin-like activity. Plays a major role in the degradation of misfolded proteins. The sequence is that of ATP-dependent Clp protease proteolytic subunit from Azoarcus sp. (strain BH72).